The following is a 445-amino-acid chain: DDB1- and CUL4-associated factor 13 (445 aa).

The residue at position 49 (Lys49) is an N6-acetyllysine. WD repeat units follow at residues 64–104 (GHRD…CIRT), 107–146 (AHEG…YGDE), 149–191 (PLHT…PVCS), 194–234 (WGFD…PLKK), 236–276 (ILDM…TPVM), 280–319 (DHVS…SREV), and 323–362 (KRMQ…KLGV). A required for nucleolar location region spans residues 353-441 (KANASEKLGV…IVSEKKKHVV (89 aa)).

The protein belongs to the WD repeat DCAF13/WDSOF1 family. As to quaternary structure, part of the small subunit (SSU) processome, composed of more than 70 proteins and the RNA chaperone small nucleolar RNA (snoRNA) U3. Component of the DCX(DCAF13) E3 ubiquitin ligase complex, at least composed of CUL4 (CUL4A or CUL4B), DDB1, DCAF13 and RBX1. Interacts (via WD40 domain) with DDB1. Interacts with ESR1 and LATS1.

It localises to the nucleus. The protein localises to the nucleolus. Its pathway is protein modification; protein ubiquitination. Its function is as follows. Part of the small subunit (SSU) processome, first precursor of the small eukaryotic ribosomal subunit. During the assembly of the SSU processome in the nucleolus, many ribosome biogenesis factors, an RNA chaperone and ribosomal proteins associate with the nascent pre-rRNA and work in concert to generate RNA folding, modifications, rearrangements and cleavage as well as targeted degradation of pre-ribosomal RNA by the RNA exosome. Participates in the 18S rRNA processing in growing oocytes, being essential for oocyte nonsurrounded nucleolus (NSN) to surrounded nucleolus (SN) transition. Substrate-recognition component of a DCX (DDB1-CUL4-X-box) E3 ubiquitin-protein ligase complex that plays a key role in embryo preimplantation and is required for normal meiotic cycle progression in oocytes. Acts as a maternal factor that regulates oocyte and zygotic chromatin tightness during maternal to zygotic transition. Also involved in the transformation of the endometrium into the decidua, known as decidualization, providing a solid foundation for implantation of blastocysts. Recognizes the histone methyltransferases SUV39H1 and SUV39H2 and directs them to polyubiquitination and proteasomal degradation, which facilitates the H3K9me3 removal and early zygotic gene expression, essential steps for progressive genome reprogramming and the establishment of pluripotency during preimplantation embryonic development. Supports the spindle assembly and chromosome condensation during oocyte meiotic division by targeting the polyubiquitination and degradation of PTEN, a lipid phosphatase that inhibits PI3K pathway as well as oocyte growth and maturation. Targets PMP22 for polyubiquitination and proteasomal degradation. The sequence is that of DDB1- and CUL4-associated factor 13 (DCAF13) from Pongo abelii (Sumatran orangutan).